We begin with the raw amino-acid sequence, 404 residues long: Cysteine desulfurase IscS (404 aa).

Pyridoxal 5'-phosphate-binding positions include 75-76 (AT), Asn-155, Gln-183, and 203-205 (SGH). Lys-206 bears the N6-(pyridoxal phosphate)lysine mark. Residue Thr-243 participates in pyridoxal 5'-phosphate binding. Cys-328 (cysteine persulfide intermediate) is an active-site residue. A [2Fe-2S] cluster-binding site is contributed by Cys-328.

It belongs to the class-V pyridoxal-phosphate-dependent aminotransferase family. NifS/IscS subfamily. Homodimer. Forms a heterotetramer with IscU, interacts with other sulfur acceptors. Requires pyridoxal 5'-phosphate as cofactor.

Its subcellular location is the cytoplasm. The catalysed reaction is (sulfur carrier)-H + L-cysteine = (sulfur carrier)-SH + L-alanine. The protein operates within cofactor biosynthesis; iron-sulfur cluster biosynthesis. In terms of biological role, master enzyme that delivers sulfur to a number of partners involved in Fe-S cluster assembly, tRNA modification or cofactor biosynthesis. Catalyzes the removal of elemental sulfur and selenium atoms from cysteine and selenocysteine to produce alanine. Functions as a sulfur delivery protein for Fe-S cluster synthesis onto IscU, an Fe-S scaffold assembly protein, as well as other S acceptor proteins. Also functions as a selenium delivery protein in the pathway for the biosynthesis of selenophosphate. The sequence is that of Cysteine desulfurase IscS from Salmonella typhi.